Consider the following 253-residue polypeptide: 5'/3'-nucleotidase SurE (253 aa).

A divalent metal cation is bound by residues Asp-8, Asp-9, Ser-39, and Asn-92.

It belongs to the SurE nucleotidase family. It depends on a divalent metal cation as a cofactor.

Its subcellular location is the cytoplasm. It carries out the reaction a ribonucleoside 5'-phosphate + H2O = a ribonucleoside + phosphate. It catalyses the reaction a ribonucleoside 3'-phosphate + H2O = a ribonucleoside + phosphate. The catalysed reaction is [phosphate](n) + H2O = [phosphate](n-1) + phosphate + H(+). Functionally, nucleotidase with a broad substrate specificity as it can dephosphorylate various ribo- and deoxyribonucleoside 5'-monophosphates and ribonucleoside 3'-monophosphates with highest affinity to 3'-AMP. Also hydrolyzes polyphosphate (exopolyphosphatase activity) with the preference for short-chain-length substrates (P20-25). Might be involved in the regulation of dNTP and NTP pools, and in the turnover of 3'-mononucleotides produced by numerous intracellular RNases (T1, T2, and F) during the degradation of various RNAs. In Escherichia fergusonii (strain ATCC 35469 / DSM 13698 / CCUG 18766 / IAM 14443 / JCM 21226 / LMG 7866 / NBRC 102419 / NCTC 12128 / CDC 0568-73), this protein is 5'/3'-nucleotidase SurE.